We begin with the raw amino-acid sequence, 255 residues long: uncharacterized protein (255 aa).

The protein belongs to the methyltransferase superfamily.

This is an uncharacterized protein from Mycobacterium marinum (strain ATCC BAA-535 / M).